A 276-amino-acid polypeptide reads, in one-letter code: Vitamin B12-binding protein (276 aa).

The N-terminal stretch at 1 to 20 (MIVRFLCWLTGLLLCTAAYA) is a signal peptide. A Fe/B12 periplasmic-binding domain is found at 24 to 273 (RVISLAPHAT…QLTALSPGSS (250 aa)). Cysteine 186 and cysteine 262 are oxidised to a cystine.

This sequence belongs to the BtuF family. As to quaternary structure, the complex is composed of two ATP-binding proteins (BtuD), two transmembrane proteins (BtuC) and a solute-binding protein (BtuF).

The protein localises to the periplasm. Functionally, part of the ABC transporter complex BtuCDF involved in vitamin B12 import. Binds vitamin B12 and delivers it to the periplasmic surface of BtuC. The chain is Vitamin B12-binding protein from Pectobacterium carotovorum subsp. carotovorum (strain PC1).